A 692-amino-acid polypeptide reads, in one-letter code: Elongation factor G (692 aa).

A tr-type G domain is found at 8–282; the sequence is AKTRNIGIMA…AVIDYLPSPL (275 aa). Residues 17–24, 81–85, and 135–138 each bind GTP; these read AHVDAGKT, DTPGH, and NKMD.

Belongs to the TRAFAC class translation factor GTPase superfamily. Classic translation factor GTPase family. EF-G/EF-2 subfamily.

The protein resides in the cytoplasm. In terms of biological role, catalyzes the GTP-dependent ribosomal translocation step during translation elongation. During this step, the ribosome changes from the pre-translocational (PRE) to the post-translocational (POST) state as the newly formed A-site-bound peptidyl-tRNA and P-site-bound deacylated tRNA move to the P and E sites, respectively. Catalyzes the coordinated movement of the two tRNA molecules, the mRNA and conformational changes in the ribosome. This is Elongation factor G from Streptococcus uberis (strain ATCC BAA-854 / 0140J).